Here is a 218-residue protein sequence, read N- to C-terminus: uncharacterized protein (218 aa).

The Response regulatory domain occupies arginine 7–alanine 123. The residue at position 58 (aspartate 58) is a 4-aspartylphosphate. In terms of domain architecture, HTH luxR-type spans alanine 150 to glycine 215. Residues asparagine 174–histidine 193 constitute a DNA-binding region (H-T-H motif).

Phosphorylated by YxjM.

It is found in the cytoplasm. Functionally, probable member of the two-component regulatory system YxjM/YxjL. This is an uncharacterized protein from Bacillus subtilis (strain 168).